Here is a 110-residue protein sequence, read N- to C-terminus: UPF0213 protein DP2720 (110 aa).

A GIY-YIG domain is found at 12 to 88 (PAWFVYIVQC…KQLSPTRKRT (77 aa)).

It belongs to the UPF0213 family.

This is UPF0213 protein DP2720 from Desulfotalea psychrophila (strain LSv54 / DSM 12343).